The sequence spans 859 residues: Paladin (859 aa).

Residues 1–34 (MGTTASTAQQTVSAGTSLEGLQGGSSSSMDSQHS) form a disordered region. Glycine 2 is lipidated: N-myristoyl glycine. The residue at position 89 (serine 89) is a Phosphoserine.

It belongs to the paladin family. In terms of tissue distribution, vascular expression detected in the central nervous system, kidney, lung, heart, skeletal muscle, white adipose tissue (WAT), brown adipose tissue, liver, pancreas and spleen. Not expressed in all vessels: for instance, not expressed in capillaries in the brain, and expressed mainly in large vessels in the heart, WAT, liver, pancreas and kidney. Predominant nonvascular expression in myocardium and lung mesenchyme. In large vessels, primarily expressed by smooth muscle cells, but occasionally detected at low levels in the endothelium. Expressed in various cells of the hematopoietic lineage.

The protein resides in the cytoplasm. Its subcellular location is the cytosol. This Mus musculus (Mouse) protein is Paladin (Pald1).